The chain runs to 332 residues: N-acetyl-gamma-glutamyl-phosphate reductase (332 aa).

Cys144 is an active-site residue.

This sequence belongs to the NAGSA dehydrogenase family. Type 1 subfamily.

The protein resides in the cytoplasm. The enzyme catalyses N-acetyl-L-glutamate 5-semialdehyde + phosphate + NADP(+) = N-acetyl-L-glutamyl 5-phosphate + NADPH + H(+). It functions in the pathway amino-acid biosynthesis; L-arginine biosynthesis; N(2)-acetyl-L-ornithine from L-glutamate: step 3/4. Its function is as follows. Catalyzes the NADPH-dependent reduction of N-acetyl-5-glutamyl phosphate to yield N-acetyl-L-glutamate 5-semialdehyde. This Archaeoglobus fulgidus (strain ATCC 49558 / DSM 4304 / JCM 9628 / NBRC 100126 / VC-16) protein is N-acetyl-gamma-glutamyl-phosphate reductase.